We begin with the raw amino-acid sequence, 295 residues long: Putative attaching and effacing protein homolog (295 aa).

Positions 1–25 (MSHYKTGHKQPRFRYSVLARCVAWA) are cleaved as a signal peptide.

It belongs to the intimin/invasin family.

The chain is Putative attaching and effacing protein homolog (eaeH) from Escherichia coli (strain K12).